Reading from the N-terminus, the 286-residue chain is Protein HEXIM2 (286 aa).

Residues 1 to 11 are compositionally biased toward polar residues; the sequence is MMATPNQTACN. Positions 1 to 195 are disordered; sequence MMATPNQTAC…GEFQRKDFSE (195 aa). Ser29 is modified (phosphoserine). Position 32 is a phosphothreonine (Thr32). Position 39 is a phosphoserine (Ser39). Thr46 is subject to Phosphothreonine. A phosphoserine mark is found at Ser51, Ser53, Ser71, Ser76, and Ser81. A compositionally biased stretch (polar residues) spans 68-78; the sequence is NSRSPRTQSPG. The span at 87–103 shows a compositional bias: basic residues; the sequence is ARKKHRRRPSKRKRHWR. Over residues 113-132 the composition is skewed to basic and acidic residues; it reads KQQRDERQSQRASRVREEMF. An interaction with P-TEFb region spans residues 140 to 143; sequence PYNT. Over residues 178–195 the composition is skewed to basic and acidic residues; the sequence is SDGRGRAHGEFQRKDFSE. Residues 207 to 277 are a coiled coil; sequence GRSKQELVRD…QENQMWNREG (71 aa). The interval 226–286 is interaction with CCNT1, HEXIM1 and HEXIM2; the sequence is QAEEETRRLQ…GCRCDEEPGT (61 aa).

It belongs to the HEXIM family. In terms of assembly, homooligomer and heterooligomer with HEXIM1; probably dimeric. Core component of the 7SK RNP complex, at least composed of 7SK RNA, LARP7, MEPCE, HEXIM1 (or HEXIM2) and P-TEFb (composed of CDK9 and CCNT1/cyclin-T1). Interacts with CCNT2. Ubiquitously expressed with higher expression in testis. HEXIM1 and HEXIM2 are differentially expressed.

It localises to the nucleus. Its function is as follows. Transcriptional regulator which functions as a general RNA polymerase II transcription inhibitor. Core component of the 7SK RNP complex: in cooperation with 7SK snRNA sequesters P-TEFb in a large inactive 7SK snRNP complex preventing RNA polymerase II phosphorylation and subsequent transcriptional elongation. This is Protein HEXIM2 (HEXIM2) from Homo sapiens (Human).